A 219-amino-acid chain; its full sequence is MGFIYDWCEERLELQSIADDILSKFVPSHVNIFYCFGGIVLTCFIIQAATGFAMTLYYRPNVVEALSSVTYITNEVSFGWLVRSIHRTSSGLMVLVLLLHVSRVYLTAGFKKPRELTWISGVILAICTVSFGVTGYSLPWDQVGYWACKIVTATPEALNNVFPSLGTVFVTLLVGGTSVGQPTXTRFYQAHTFILPLVTLALLLTHFLMIRKQGISGPL.

Residues 32 to 52 (IFYCFGGIVLTCFIIQAATGF) traverse the membrane as a helical segment. Cys35 provides a ligand contact to heme c. Heme b-binding residues include His86 and His100. Helical transmembrane passes span 90-110 (SGLM…TAGF), 116-136 (LTWI…VTGY), and 190-210 (AHTF…FLMI). Heme b is bound by residues His191 and His206.

Belongs to the cytochrome b family. PetB subfamily. In terms of assembly, the 4 large subunits of the cytochrome b6-f complex are cytochrome b6, subunit IV (17 kDa polypeptide, PetD), cytochrome f and the Rieske protein, while the 4 small subunits are PetG, PetL, PetM and PetN. The complex functions as a dimer. Heme b serves as cofactor. The cofactor is heme c.

The protein resides in the plastid. The protein localises to the chloroplast thylakoid membrane. Its function is as follows. Component of the cytochrome b6-f complex, which mediates electron transfer between photosystem II (PSII) and photosystem I (PSI), cyclic electron flow around PSI, and state transitions. This Amphidinium operculatum (Dinoflagellate) protein is Cytochrome b6.